Reading from the N-terminus, the 259-residue chain is Eukaryotic translation initiation factor 4E1 (259 aa).

Residues 1 to 70 (MQSDFHRMKN…TATTTAPAGD (70 aa)) are disordered. Residues 18–27 (FKTSAPSTEQ) are compositionally biased toward polar residues. Residues 41 to 51 (EAKDVKPKEDP) show a composition bias toward basic and acidic residues. A compositionally biased stretch (low complexity) spans 54–70 (TGEPAGNTATTTAPAGD). Residues 100–101 (WE), 146–147 (WE), and 199–204 (RGKSNK) each bind mRNA.

This sequence belongs to the eukaryotic initiation factor 4E family. EIF4F is a multi-subunit complex, the composition of which varies with external and internal environmental conditions. It is composed of at least eIF4A, eIF4E1 and eIF4G1. Recruited by cup in oocytes and in early embryos, preventing the interaction with eIF4G. The interaction with cup therefore prevents the translation of key transcripts such as oskar (osk) and nanos (nos) in some regions in the early embryo. Interacts with mxt. Interacts with 4E-T and Thor. Forms a RNP containing at least me31B, eIF4E1, cup, tral and pAbp; this interaction is required for the translational silencing of maternal mRNAs during the maternal-to-zygotic transition. Phosphorylation increases the ability of the protein to bind to mRNA caps and to form the eIF4F complex. As to expression, expressed at the posterior end of developing oocytes (at protein level). Preferential expression in the pole cells, at different developmental stages.

The protein resides in the cytoplasm. Its subcellular location is the cytoplasmic ribonucleoprotein granule. The protein localises to the nucleus. It is found in the nuclear body. Its function is as follows. Recognizes and binds the 7-methylguanosine (m7G)-containing mRNA cap during an early step in the initiation of protein synthesis and facilitates ribosome binding by inducing the unwinding of the mRNAs secondary structures. In 0-1 hour embryos, forms a complex with me31B, cup, tral and pAbp which binds to various mRNAs including maternal mRNAs, and down-regulates their expression during the maternal-to-zygotic transition. This Drosophila melanogaster (Fruit fly) protein is Eukaryotic translation initiation factor 4E1.